A 119-amino-acid polypeptide reads, in one-letter code: Dihydroneopterin aldolase (119 aa).

Substrate contacts are provided by residues E21, Y53, and 72–73 (IE). The active-site Proton donor/acceptor is K99.

This sequence belongs to the DHNA family.

The catalysed reaction is 7,8-dihydroneopterin = 6-hydroxymethyl-7,8-dihydropterin + glycolaldehyde. The protein operates within cofactor biosynthesis; tetrahydrofolate biosynthesis; 2-amino-4-hydroxy-6-hydroxymethyl-7,8-dihydropteridine diphosphate from 7,8-dihydroneopterin triphosphate: step 3/4. In terms of biological role, catalyzes the conversion of 7,8-dihydroneopterin to 6-hydroxymethyl-7,8-dihydropterin. In Streptococcus pyogenes serotype M1, this protein is Dihydroneopterin aldolase (folB).